The sequence spans 159 residues: Probable metallophosphoesterase MPN_126 (159 aa).

Mn(2+)-binding residues include Asp9, His11, Asp34, Asn53, His75, His107, and His109.

This sequence belongs to the metallophosphoesterase superfamily. YfcE family. The cofactor is Mn(2+).

In Mycoplasma pneumoniae (strain ATCC 29342 / M129 / Subtype 1) (Mycoplasmoides pneumoniae), this protein is Probable metallophosphoesterase MPN_126.